The chain runs to 643 residues: Threonine--tRNA ligase (643 aa).

Residues 3–64 enclose the TGS domain; it reads DMINITFPDG…QEDGAVEIIT (62 aa). Residues 245 to 542 form a catalytic region; the sequence is DHRKLGKELK…LIEEHKGALP (298 aa). Residues Cys-338, His-389, and His-519 each contribute to the Zn(2+) site.

It belongs to the class-II aminoacyl-tRNA synthetase family. As to quaternary structure, homodimer. Requires Zn(2+) as cofactor.

It is found in the cytoplasm. It catalyses the reaction tRNA(Thr) + L-threonine + ATP = L-threonyl-tRNA(Thr) + AMP + diphosphate + H(+). Catalyzes the attachment of threonine to tRNA(Thr) in a two-step reaction: L-threonine is first activated by ATP to form Thr-AMP and then transferred to the acceptor end of tRNA(Thr). Also edits incorrectly charged L-seryl-tRNA(Thr). The protein is Threonine--tRNA ligase of Bacillus velezensis (strain DSM 23117 / BGSC 10A6 / LMG 26770 / FZB42) (Bacillus amyloliquefaciens subsp. plantarum).